The chain runs to 452 residues: MKSIPKLFGTSGIRGKYQEEITLELALDVARALAKYIGGKNKKVVIGRDTRTSGKIIENVMSAGLQQSGCDVLLLGMVPTPVVGYATLKKEADAGIMITASHNPSQYNGIKLWNSDGLAYKQDQERTIEKLVYEKDFNIVKWNEIGKEYDISSFKDKYIDDIVAKSGINPLKPLKVVVDCACGAGSYLSPEALRRAGMNVITLNAQPDGSFPGRRPEPNEANLGELMKTVKALNADVGLAHDGDADRMIAVDENGNLSDFDKLLTIMAKEFGGTVVTTVDASACLDIQMQKIGGNVLRTPVGDVHVAESINKNKGTFGGEPSGTWLHPDFCMCPDGLLSGLRIVRTIQKNGKLSKQLDAIENYPTIRQKVTCENSKKKTVMSIVEEKFEEEFDDVKEILTIDGVRISFEDDSWVLIRPSGTEPYIRITAEGKTQEHLNSIEKISNEFLNNII.

The active-site Phosphoserine intermediate is Ser101. Mg(2+) contacts are provided by Ser101, Asp242, Asp244, and Asp246. A Phosphoserine modification is found at Ser101.

It belongs to the phosphohexose mutase family. The cofactor is Mg(2+). Post-translationally, activated by phosphorylation.

The enzyme catalyses alpha-D-glucosamine 1-phosphate = D-glucosamine 6-phosphate. Catalyzes the conversion of glucosamine-6-phosphate to glucosamine-1-phosphate. This chain is Probable phosphoglucosamine mutase, found in Methanosphaera stadtmanae (strain ATCC 43021 / DSM 3091 / JCM 11832 / MCB-3).